The following is a 214-amino-acid chain: Peptidyl-tRNA hydrolase (214 aa).

Tyr14 provides a ligand contact to tRNA. His19 functions as the Proton acceptor in the catalytic mechanism. Positions 64, 66, and 113 each coordinate tRNA. A disordered region spans residues 184–214 (RINAPPPKPEKKRGSETSDPSAESADHAGGG).

It belongs to the PTH family. In terms of assembly, monomer.

The protein resides in the cytoplasm. It catalyses the reaction an N-acyl-L-alpha-aminoacyl-tRNA + H2O = an N-acyl-L-amino acid + a tRNA + H(+). Hydrolyzes ribosome-free peptidyl-tRNAs (with 1 or more amino acids incorporated), which drop off the ribosome during protein synthesis, or as a result of ribosome stalling. In terms of biological role, catalyzes the release of premature peptidyl moieties from peptidyl-tRNA molecules trapped in stalled 50S ribosomal subunits, and thus maintains levels of free tRNAs and 50S ribosomes. The sequence is that of Peptidyl-tRNA hydrolase from Roseiflexus castenholzii (strain DSM 13941 / HLO8).